The following is a 231-amino-acid chain: Ribonuclease HI (231 aa).

The RNase H type-1 domain maps to 1 to 146; sequence MRERAVAACD…ADRAASQAAV (146 aa). Mg(2+) is bound by residues aspartate 10, glutamate 50, aspartate 72, and aspartate 138. 2 stretches are compositionally biased toward low complexity: residues 148–157 and 166–181; these read QEAAGSALGS and VPAARRAPRRGSSGAA. Disordered stretches follow at residues 148 to 192 and 212 to 231; these read QEAA…SART and PIAKNDQGWGHPECRTVAAG.

Belongs to the RNase H family. As to quaternary structure, monomer. It depends on Mg(2+) as a cofactor.

The protein localises to the cytoplasm. The catalysed reaction is Endonucleolytic cleavage to 5'-phosphomonoester.. In terms of biological role, endonuclease that specifically degrades the RNA of RNA-DNA hybrids. The sequence is that of Ribonuclease HI (rnhA) from Streptomyces coelicolor (strain ATCC BAA-471 / A3(2) / M145).